The following is a 304-amino-acid chain: Small ribosomal subunit protein uS3 (304 aa).

The KH type-2 domain maps to 17–86; that stretch reads IDEFFAEELG…DPQVDVQEVD (70 aa). Residues 216–304 are disordered; the sequence is LLEGEPEDSE…DEMDEEGDDE (89 aa).

This sequence belongs to the universal ribosomal protein uS3 family. As to quaternary structure, part of the 30S ribosomal subunit.

Functionally, binds the lower part of the 30S subunit head. This Haloarcula marismortui (strain ATCC 43049 / DSM 3752 / JCM 8966 / VKM B-1809) (Halobacterium marismortui) protein is Small ribosomal subunit protein uS3.